Here is a 547-residue protein sequence, read N- to C-terminus: MAAKDVVFGDAARAKMVEGVNILANAVKVTLGPKGRNVVLERSFGGPTVTKDGVSVAKEIELKDKLQNMGAQMVKEVASKTSDNAGDGTTTATVLAQSIVREGMKFVAAGMNPMDLKRGIDKAVAAAVEELKKVSKPTTTSKEIAQVGAISANSDTSIGERIAEAMDKVGKEGVITVEDGKSLADELEVVEGMQFDRGYLSPYFINNPEKQVVQLDSPFVLLFDKKVSNIRDLLPVLEQVAKAGRPLLIIAEDVEGEALATLVVNNIRGILKTAAVKAPGFGDRRKAMLEDIAILTGGTVIAEEIGLTLEKATLNDLGQAKRIEIGKENTIIIDGAGDAAAIEGRVKQIRAQIEEATSDYDREKLQERVAKLAGGVAVIKVGAATEVEMKEKKARVEDALHATRAAVEEGIVPGGGVALLRARAAISALTGENPDQNAGIKIVLRAMEEPLRQIVLNAGEEASVVVAKVIEGKGNYGYNAASGEYGDLVEMGVLDPTKVTRTALQNAASVASLMLTTDCAVAETPKEESAPAMPGGMGGMGGMEGMM.

ATP contacts are provided by residues 30–33, K51, 87–91, G415, 479–481, and D495; these read TLGP, DGTTT, and NAA.

This sequence belongs to the chaperonin (HSP60) family. In terms of assembly, forms a cylinder of 14 subunits composed of two heptameric rings stacked back-to-back. Interacts with the co-chaperonin GroES.

The protein localises to the cytoplasm. It carries out the reaction ATP + H2O + a folded polypeptide = ADP + phosphate + an unfolded polypeptide.. Its function is as follows. Together with its co-chaperonin GroES, plays an essential role in assisting protein folding. The GroEL-GroES system forms a nano-cage that allows encapsulation of the non-native substrate proteins and provides a physical environment optimized to promote and accelerate protein folding. This is Chaperonin GroEL from Cupriavidus pinatubonensis (strain JMP 134 / LMG 1197) (Cupriavidus necator (strain JMP 134)).